Reading from the N-terminus, the 230-residue chain is Flagellar L-ring protein (230 aa).

The first 22 residues, 1–22 (MSPLSNFARTALACAVAALLGG), serve as a signal peptide directing secretion. Cys23 is lipidated: N-palmitoyl cysteine. Cys23 is lipidated: S-diacylglycerol cysteine.

This sequence belongs to the FlgH family. The basal body constitutes a major portion of the flagellar organelle and consists of four rings (L,P,S, and M) mounted on a central rod.

The protein resides in the cell outer membrane. It localises to the bacterial flagellum basal body. Its function is as follows. Assembles around the rod to form the L-ring and probably protects the motor/basal body from shearing forces during rotation. In Stenotrophomonas maltophilia (strain R551-3), this protein is Flagellar L-ring protein.